The sequence spans 554 residues: 2-succinyl-5-enolpyruvyl-6-hydroxy-3-cyclohexene-1-carboxylate synthase (554 aa).

Belongs to the TPP enzyme family. MenD subfamily. As to quaternary structure, homodimer. The cofactor is Mg(2+). It depends on Mn(2+) as a cofactor. Thiamine diphosphate is required as a cofactor.

It catalyses the reaction isochorismate + 2-oxoglutarate + H(+) = 5-enolpyruvoyl-6-hydroxy-2-succinyl-cyclohex-3-ene-1-carboxylate + CO2. The protein operates within quinol/quinone metabolism; 1,4-dihydroxy-2-naphthoate biosynthesis; 1,4-dihydroxy-2-naphthoate from chorismate: step 2/7. It participates in quinol/quinone metabolism; menaquinone biosynthesis. Functionally, catalyzes the thiamine diphosphate-dependent decarboxylation of 2-oxoglutarate and the subsequent addition of the resulting succinic semialdehyde-thiamine pyrophosphate anion to isochorismate to yield 2-succinyl-5-enolpyruvyl-6-hydroxy-3-cyclohexene-1-carboxylate (SEPHCHC). This chain is 2-succinyl-5-enolpyruvyl-6-hydroxy-3-cyclohexene-1-carboxylate synthase, found in Renibacterium salmoninarum (strain ATCC 33209 / DSM 20767 / JCM 11484 / NBRC 15589 / NCIMB 2235).